Reading from the N-terminus, the 77-residue chain is Apelin (77 aa).

A signal peptide spans 1–22 (MNLRLCVQALLLLWLSLTAVCG). The propeptide occupies 23–41 (GSLMPLPDGNGLEDGNVRH). A disordered region spans residues 43–77 (VQPRGSRNGPGPWQGGRRKFRRQRPRLSHKGPMPF). A compositionally biased stretch (basic residues) spans 58–71 (GRRKFRRQRPRLSH).

Belongs to the apelin family. In terms of processing, several active peptides may be produced by proteolytic processing of the peptide precursor. Expressed in the brain with highest levels in the frontal cortex, thalamus, hypothalamus and midbrain. Secreted by the mammary gland into the colostrum and the milk.

The protein localises to the secreted. It localises to the extracellular space. Functionally, peptide hormone that functions as endogenous ligand for the G-protein-coupled apelin receptor (APLNR/APJ), that plays a role in cadiovascular homeostasis. Functions as a balanced agonist activating both G(i) protein pathway and beta-arrestin pathway of APLNR. Downstream G proteins activation, apelin can inhibit cAMP production and activate key intracellular effectors such as ERKs. On the other hand, APLNR activation induces beta-arrestin recruitment to the membrane leading to desensitization and internalization of the receptor. Apelin blunts cardiac hypertrophic induction from APLNR on response to pathological stimuli, but also induces myocardial hypertrophy under normal conditions. Apelin-36 dissociates more hardly than (pyroglu)apelin-13 from APLNR. Involved in the regulation of cardiac precursor cell movements during gastrulation and heart morphogenesis. Has an inhibitory effect on cytokine production in response to T-cell receptor/CD3 cross-linking; the oral intake of apelin in the colostrum and the milk might therefore modulate immune responses in neonates. Plays a role in early coronary blood vessels formation. Mediates myocardial contractility in an ERK1/2-dependent manner. May also have a role in the central control of body fluid homeostasis by influencing vasopressin release and drinking behavior. (Microbial infection) Endogenous ligand for the apelin receptor (APLNR), an alternative coreceptor with CD4 for HIV-1 infection. Inhibits HIV-1 entry in cells coexpressing CD4 and APLNR. Apelin-36 has a greater inhibitory activity on HIV infection than other synthetic apelin derivatives. This chain is Apelin, found in Homo sapiens (Human).